The primary structure comprises 612 residues: Adherence factor (612 aa).

Low complexity-rich tracts occupy residues 1-18 (MSSF…NLSS), 47-68 (SSMM…QQQQ), 94-106 (LQTQ…SATT), 115-141 (YNQQ…NNMQ), 182-203 (QSAQ…QPRS), and 218-228 (SRQVSGSGRST). Disordered stretches follow at residues 1–20 (MSSF…SSFQ), 46–68 (ASSM…QQQQ), 94–143 (LQTQ…MQFF), 179–273 (PQLQ…NNNK), 443–480 (KEKK…NTNN), 497–527 (SQLM…LSNN), and 546–612 (SQEQ…KQFY). Residues 230–240 (AKKQSAITSGS) show a composition bias toward polar residues. The segment covering 254 to 272 (TSVANSTSTTTMTTTNNNN) has biased composition (low complexity). Basic and acidic residues predominate over residues 443–457 (KEKKLTEKTIEQREQ). Polar residues-rich tracts occupy residues 465–480 (ANHS…NTNN) and 497–512 (SQLM…ATKI). Residues 555 to 571 (NQHHHNHQQHPLIHHHQ) are compositionally biased toward basic residues. Low complexity predominate over residues 585 to 606 (PSTIPTSSLSIQQQQQQQQQQL).

In terms of biological role, surface antigen mediating adhesion and aggregation in S.cerevisiae. The protein is Adherence factor (ADF1) of Candida albicans (strain SC5314 / ATCC MYA-2876) (Yeast).